A 698-amino-acid chain; its full sequence is Protein artemis (698 aa).

T380 carries the phosphothreonine modification. Residue S385 is modified to Phosphoserine. 3 disordered regions span residues 445 to 485 (ANFV…DPDV), 505 to 595 (LENL…DSIS), and 620 to 669 (NGVP…LPKP). Residues 449–461 (DCDESNSDSEGEL) are compositionally biased toward acidic residues. Polar residues predominate over residues 508–521 (LPSSIETGGSQSPK). A compositionally biased stretch (low complexity) spans 538–551 (THISSQNSSQSTHI). A compositionally biased stretch (polar residues) spans 552 to 583 (TDQGSQGWDSQCDTVLLSSQEKSGGDSTSLNK). A compositionally biased stretch (low complexity) spans 641–655 (TSLTSTQADSQSSSD). At S650 the chain carries Phosphoserine; by ATM.

It belongs to the DNA repair metallo-beta-lactamase (DRMBL) family. In terms of assembly, interacts with LIG4; the interaction is direct. Interacts with ATM. Interacts with BRCA1. Interacts with PRKDC. Interacts with TP53BP1. Also exhibits ATM- and phosphorylation-dependent interaction with the MRN complex, composed of MRE11, RAD50, and NBN. Post-translationally, phosphorylation on undefined residues by PRKDC may stimulate endonucleolytic activity on 5' and 3' hairpins and overhangs. PRKDC must remain present, even after phosphorylation, for efficient hairpin opening. Also phosphorylated by ATM in response to ionizing radiation (IR) and by ATR in response to ultraviolet (UV) radiation.

The protein localises to the nucleus. Its function is as follows. Required for V(D)J recombination, the process by which exons encoding the antigen-binding domains of immunoglobulins and T-cell receptor proteins are assembled from individual V, (D), and J gene segments. V(D)J recombination is initiated by the lymphoid specific RAG endonuclease complex, which generates site specific DNA double strand breaks (DSBs). These DSBs present two types of DNA end structures: hairpin sealed coding ends and phosphorylated blunt signal ends. These ends are independently repaired by the non homologous end joining (NHEJ) pathway to form coding and signal joints respectively. This protein exhibits single-strand specific 5'-3' exonuclease activity in isolation, and acquires endonucleolytic activity on 5' and 3' hairpins and overhangs when in a complex with PRKDC. The latter activity is required specifically for the resolution of closed hairpins prior to the formation of the coding joint. May also be required for the repair of complex DSBs induced by ionizing radiation, which require substantial end-processing prior to religation by NHEJ. This Rattus norvegicus (Rat) protein is Protein artemis (Dclre1c).